The following is a 348-amino-acid chain: Holliday junction branch migration complex subunit RuvB (348 aa).

A compositionally biased stretch (polar residues) spans 1-10 (MAIVSSNAGS). Residues 1-41 (MAIVSSNAGSSAPRREPVLDAQPLPEESSGRPDDGLRPKRL) are disordered. The interval 13 to 197 (PRREPVLDAQ…FGLIQRLEFY (185 aa)) is large ATPase domain (RuvB-L). Basic and acidic residues predominate over residues 28 to 41 (SSGRPDDGLRPKRL). Positions 36, 37, 78, 81, 82, 83, 187, 197, and 234 each coordinate ATP. A Mg(2+)-binding site is contributed by Thr-82. The small ATPAse domain (RuvB-S) stretch occupies residues 198–269 (GQEDLEAIVS…LVSQALSLHR (72 aa)). The interval 272-348 (HRGLDAGDRR…RAHLREQEVA (77 aa)) is head domain (RuvB-H). Residues Arg-327 and Arg-332 each coordinate DNA.

It belongs to the RuvB family. Homohexamer. Forms an RuvA(8)-RuvB(12)-Holliday junction (HJ) complex. HJ DNA is sandwiched between 2 RuvA tetramers; dsDNA enters through RuvA and exits via RuvB. An RuvB hexamer assembles on each DNA strand where it exits the tetramer. Each RuvB hexamer is contacted by two RuvA subunits (via domain III) on 2 adjacent RuvB subunits; this complex drives branch migration. In the full resolvosome a probable DNA-RuvA(4)-RuvB(12)-RuvC(2) complex forms which resolves the HJ.

The protein resides in the cytoplasm. It carries out the reaction ATP + H2O = ADP + phosphate + H(+). In terms of biological role, the RuvA-RuvB-RuvC complex processes Holliday junction (HJ) DNA during genetic recombination and DNA repair, while the RuvA-RuvB complex plays an important role in the rescue of blocked DNA replication forks via replication fork reversal (RFR). RuvA specifically binds to HJ cruciform DNA, conferring on it an open structure. The RuvB hexamer acts as an ATP-dependent pump, pulling dsDNA into and through the RuvAB complex. RuvB forms 2 homohexamers on either side of HJ DNA bound by 1 or 2 RuvA tetramers; 4 subunits per hexamer contact DNA at a time. Coordinated motions by a converter formed by DNA-disengaged RuvB subunits stimulates ATP hydrolysis and nucleotide exchange. Immobilization of the converter enables RuvB to convert the ATP-contained energy into a lever motion, pulling 2 nucleotides of DNA out of the RuvA tetramer per ATP hydrolyzed, thus driving DNA branch migration. The RuvB motors rotate together with the DNA substrate, which together with the progressing nucleotide cycle form the mechanistic basis for DNA recombination by continuous HJ branch migration. Branch migration allows RuvC to scan DNA until it finds its consensus sequence, where it cleaves and resolves cruciform DNA. In Parasynechococcus marenigrum (strain WH8102), this protein is Holliday junction branch migration complex subunit RuvB.